Reading from the N-terminus, the 22-residue chain is Cytin chain B (22 aa).

This sequence belongs to the protease inhibitor I13 (potato type I serine protease inhibitor) family. As to quaternary structure, heterodimer of an A chain and a B chain, linked by a disulfide bond.

Its function is as follows. Inhibitor of chymotrypsin. The protein is Cytin chain B of Theromyzon tessulatum (Duck leech).